A 350-amino-acid polypeptide reads, in one-letter code: Small ribosomal subunit biogenesis GTPase RsgA (350 aa).

Over residues 1-17 the composition is skewed to polar residues; sequence MSKNKLSKGQQRRVNAN. The segment at 1–33 is disordered; that stretch reads MSKNKLSKGQQRRVNANHQRRLKTSKEKPDYDD. One can recognise a CP-type G domain in the interval 104–273; the sequence is TSVLTRPDFY…VIDSPGVREF (170 aa). Residues 160–163 and 214–222 each bind GTP; these read NKID and GQSGVGKSS. 4 residues coordinate Zn(2+): cysteine 297, cysteine 302, histidine 304, and cysteine 310.

This sequence belongs to the TRAFAC class YlqF/YawG GTPase family. RsgA subfamily. In terms of assembly, monomer. Associates with 30S ribosomal subunit, binds 16S rRNA. The cofactor is Zn(2+).

The protein localises to the cytoplasm. In terms of biological role, one of several proteins that assist in the late maturation steps of the functional core of the 30S ribosomal subunit. Helps release RbfA from mature subunits. May play a role in the assembly of ribosomal proteins into the subunit. Circularly permuted GTPase that catalyzes slow GTP hydrolysis, GTPase activity is stimulated by the 30S ribosomal subunit. The sequence is that of Small ribosomal subunit biogenesis GTPase RsgA from Escherichia coli (strain ATCC 8739 / DSM 1576 / NBRC 3972 / NCIMB 8545 / WDCM 00012 / Crooks).